A 380-amino-acid polypeptide reads, in one-letter code: ATPase ASNA1 homolog (380 aa).

Residue 48–55 (KGGVGKTT) participates in ATP binding. Asp77 is a catalytic residue. ATP-binding residues include Glu248 and Asn275.

Belongs to the arsA ATPase family. In terms of assembly, homodimer.

It is found in the cytoplasm. Its subcellular location is the endoplasmic reticulum. In terms of biological role, ATPase required for the post-translational delivery of tail-anchored (TA) proteins to the endoplasmic reticulum. Recognizes and selectively binds the transmembrane domain of TA proteins in the cytosol. This complex then targets to the endoplasmic reticulum by membrane-bound receptors, where the tail-anchored protein is released for insertion. This process is regulated by ATP binding and hydrolysis. ATP binding drives the homodimer towards the closed dimer state, facilitating recognition of newly synthesized TA membrane proteins. ATP hydrolysis is required for insertion. Subsequently, the homodimer reverts towards the open dimer state, lowering its affinity for the membrane-bound receptor, and returning it to the cytosol to initiate a new round of targeting. The protein is ATPase ASNA1 homolog of Plasmodium yoelii yoelii.